The chain runs to 572 residues: Squalene synthase (572 aa).

2 helical membrane passes run 316 to 336 (SVFNFCAIPQVMAIATLELMF) and 492 to 512 (FFLIILVGMVTFMGIVALITW).

The protein belongs to the phytoene/squalene synthase family. As to quaternary structure, monomer. Mg(2+) is required as a cofactor.

It localises to the endoplasmic reticulum membrane. The enzyme catalyses 2 (2E,6E)-farnesyl diphosphate + NADPH + H(+) = squalene + 2 diphosphate + NADP(+). It carries out the reaction 2 (2E,6E)-farnesyl diphosphate + NADH + H(+) = squalene + 2 diphosphate + NAD(+). Its pathway is terpene metabolism; lanosterol biosynthesis; lanosterol from farnesyl diphosphate: step 1/3. Its function is as follows. Catalyzes the condensation of 2 two farnesyl pyrophosphate moieties to form squalene. It is the first committed enzyme of the sterol biosynthesis pathway. Required for the biosynthesis of ergosterol. The sequence is that of Squalene synthase (ERG9) from Mycosarcoma maydis (Corn smut fungus).